Consider the following 432-residue polypeptide: Adenylosuccinate synthetase (432 aa).

Residues 12–18 (GDEGKGK) and 40–42 (GHT) contribute to the GTP site. Aspartate 13 (proton acceptor) is an active-site residue. 2 residues coordinate Mg(2+): aspartate 13 and glycine 40. Residues 13 to 16 (DEGK), 38 to 41 (NAGH), threonine 132, arginine 146, glutamine 226, threonine 241, and arginine 305 each bind IMP. The active-site Proton donor is histidine 41. 301 to 307 (VVTGRKR) is a substrate binding site. GTP is bound by residues arginine 307, 333-335 (KLD), and 415-417 (STS).

It belongs to the adenylosuccinate synthetase family. In terms of assembly, homodimer. It depends on Mg(2+) as a cofactor.

The protein localises to the cytoplasm. It catalyses the reaction IMP + L-aspartate + GTP = N(6)-(1,2-dicarboxyethyl)-AMP + GDP + phosphate + 2 H(+). It functions in the pathway purine metabolism; AMP biosynthesis via de novo pathway; AMP from IMP: step 1/2. Plays an important role in the de novo pathway of purine nucleotide biosynthesis. Catalyzes the first committed step in the biosynthesis of AMP from IMP. The polypeptide is Adenylosuccinate synthetase (Mesorhizobium japonicum (strain LMG 29417 / CECT 9101 / MAFF 303099) (Mesorhizobium loti (strain MAFF 303099))).